Reading from the N-terminus, the 39-residue chain is uncharacterized protein (39 aa).

Over residues 1–16 the composition is skewed to polar residues; that stretch reads MLNIQPTQSIVNNQPK. Positions 1-39 are disordered; that stretch reads MLNIQPTQSIVNNQPKSDQKKQKPADLLKEFYDKTGNRN. Residues 17 to 39 show a composition bias toward basic and acidic residues; the sequence is SDQKKQKPADLLKEFYDKTGNRN.

This is an uncharacterized protein from Dictyostelium discoideum (Social amoeba).